Here is a 323-residue protein sequence, read N- to C-terminus: Viral cathepsin (323 aa).

The signal sequence occupies residues 1–16 (MNKILFYLFVYGVVNS). Residues 17–112 (AAYDLLKAPN…IVLDQPPGKG (96 aa)) constitute a propeptide, activation peptide. Disulfide bonds link Cys133-Cys174, Cys167-Cys207, and Cys262-Cys310. The active site involves Cys136. N-linked (GlcNAc...) asparagine; by host glycosylation is present at Asn158. Residues His269 and Asn289 contribute to the active site.

This sequence belongs to the peptidase C1 family. Interacts with chitinase/CHIA; this interaction maintains VCATH in the host endoplasmic reticulum. Synthesized as an inactive proenzyme and activated by proteolytic removal of the inhibitory propeptide.

The protein localises to the host endoplasmic reticulum. It catalyses the reaction Endopeptidase of broad specificity, hydrolyzing substrates of both cathepsin L and cathepsin B.. Its function is as follows. Cysteine protease that plays an essential role in host liquefaction to facilitate horizontal transmission of the virus. Accumulates within infected cells as an inactive proenzyme (proV-CATH), which is activated by proteolytic cleavage upon cell death. This Lepidoptera (butterflies and moths) protein is Viral cathepsin (VCATH).